A 121-amino-acid polypeptide reads, in one-letter code: Large ribosomal subunit protein uL18 (121 aa).

This sequence belongs to the universal ribosomal protein uL18 family. As to quaternary structure, part of the 50S ribosomal subunit; part of the 5S rRNA/L5/L18/L25 subcomplex. Contacts the 5S and 23S rRNAs.

In terms of biological role, this is one of the proteins that bind and probably mediate the attachment of the 5S RNA into the large ribosomal subunit, where it forms part of the central protuberance. The sequence is that of Large ribosomal subunit protein uL18 from Herpetosiphon aurantiacus (strain ATCC 23779 / DSM 785 / 114-95).